Consider the following 163-residue polypeptide: NADH-quinone oxidoreductase subunit I (163 aa).

2 4Fe-4S ferredoxin-type domains span residues 53 to 83 (LRRY…IEAG) and 94 to 123 (TLYE…ETRE). Cysteine 63, cysteine 66, cysteine 69, cysteine 73, cysteine 103, cysteine 106, cysteine 109, and cysteine 113 together coordinate [4Fe-4S] cluster.

It belongs to the complex I 23 kDa subunit family. In terms of assembly, NDH-1 is composed of 14 different subunits. Subunits NuoA, H, J, K, L, M, N constitute the membrane sector of the complex. The cofactor is [4Fe-4S] cluster.

It is found in the cell inner membrane. The catalysed reaction is a quinone + NADH + 5 H(+)(in) = a quinol + NAD(+) + 4 H(+)(out). Its function is as follows. NDH-1 shuttles electrons from NADH, via FMN and iron-sulfur (Fe-S) centers, to quinones in the respiratory chain. The immediate electron acceptor for the enzyme in this species is believed to be ubiquinone. Couples the redox reaction to proton translocation (for every two electrons transferred, four hydrogen ions are translocated across the cytoplasmic membrane), and thus conserves the redox energy in a proton gradient. This Alkalilimnicola ehrlichii (strain ATCC BAA-1101 / DSM 17681 / MLHE-1) protein is NADH-quinone oxidoreductase subunit I.